Reading from the N-terminus, the 525-residue chain is GMP synthase [glutamine-hydrolyzing] (525 aa).

A Glutamine amidotransferase type-1 domain is found at 9–207 (RILILDFGSQ…VQDICGCEAL (199 aa)). Catalysis depends on cysteine 86, which acts as the Nucleophile. Active-site residues include histidine 181 and glutamate 183. The region spanning 208 to 400 (WTASNIVEDA…LGLPYDMVYR (193 aa)) is the GMPS ATP-PPase domain. 235–241 (SGGVDSS) contacts ATP.

As to quaternary structure, homodimer.

It carries out the reaction XMP + L-glutamine + ATP + H2O = GMP + L-glutamate + AMP + diphosphate + 2 H(+). The protein operates within purine metabolism; GMP biosynthesis; GMP from XMP (L-Gln route): step 1/1. Functionally, catalyzes the synthesis of GMP from XMP. This chain is GMP synthase [glutamine-hydrolyzing], found in Pseudomonas entomophila (strain L48).